The primary structure comprises 708 residues: Polyribonucleotide nucleotidyltransferase (708 aa).

D488 and D494 together coordinate Mg(2+). A KH domain is found at 555–615 (PIIKVTKVDP…ENVDKAIELI (61 aa)). The region spanning 625–692 (GEVLEGKVTR…DLGRLQFKRV (68 aa)) is the S1 motif domain.

This sequence belongs to the polyribonucleotide nucleotidyltransferase family. Mg(2+) serves as cofactor.

The protein localises to the cytoplasm. The enzyme catalyses RNA(n+1) + phosphate = RNA(n) + a ribonucleoside 5'-diphosphate. Involved in mRNA degradation. Catalyzes the phosphorolysis of single-stranded polyribonucleotides processively in the 3'- to 5'-direction. In Thermotoga petrophila (strain ATCC BAA-488 / DSM 13995 / JCM 10881 / RKU-1), this protein is Polyribonucleotide nucleotidyltransferase.